The chain runs to 507 residues: Histidine ammonia-lyase (507 aa).

The 5-imidazolinone (Ala-Gly) cross-link spans 141–143 (ASG). Ser142 bears the 2,3-didehydroalanine (Ser) mark.

It belongs to the PAL/histidase family. Post-translationally, contains an active site 4-methylidene-imidazol-5-one (MIO), which is formed autocatalytically by cyclization and dehydration of residues Ala-Ser-Gly.

It localises to the cytoplasm. The enzyme catalyses L-histidine = trans-urocanate + NH4(+). The protein operates within amino-acid degradation; L-histidine degradation into L-glutamate; N-formimidoyl-L-glutamate from L-histidine: step 1/3. This Cereibacter sphaeroides (strain KD131 / KCTC 12085) (Rhodobacter sphaeroides) protein is Histidine ammonia-lyase.